We begin with the raw amino-acid sequence, 124 residues long: Small ribosomal subunit protein eS8 (124 aa).

Residues 1-22 show a composition bias toward basic residues; the sequence is MQYQGRSKRSKTGARLRPRSKK. Disordered regions lie at residues 1–40 and 102–124; these read MQYQ…GEPR and AGTA…RVDE. Residues 23 to 32 are compositionally biased toward basic and acidic residues; the sequence is SKSELGREPT. Residues 106 to 124 are compositionally biased toward polar residues; sequence RVTSRPGQDGQVNATRVDE.

This sequence belongs to the eukaryotic ribosomal protein eS8 family. As to quaternary structure, part of the 30S ribosomal subunit.

This Halobacterium salinarum (strain ATCC 29341 / DSM 671 / R1) protein is Small ribosomal subunit protein eS8.